The primary structure comprises 536 residues: Xylulose kinase (536 aa).

4 residues coordinate substrate: His99, Arg170, Asp280, and Asn281. ATP contacts are provided by residues Trp355, Gly441 to Ala442, and Asn445.

The protein belongs to the FGGY kinase family. Monomer.

The catalysed reaction is D-xylulose + ATP = D-xylulose 5-phosphate + ADP + H(+). Phosphorylates D-xylulose to produce D-xylulose 5-phosphate, a molecule that may play an important role in the regulation of glucose metabolism and lipogenesis. The protein is Xylulose kinase (Xylb) of Rattus norvegicus (Rat).